Here is a 445-residue protein sequence, read N- to C-terminus: 3-phosphoshikimate 1-carboxyvinyltransferase (445 aa).

Positions 21, 22, and 26 each coordinate 3-phosphoshikimate. K21 lines the phosphoenolpyruvate pocket. Residues G92 and R120 each coordinate phosphoenolpyruvate. The 3-phosphoshikimate site is built by S165, Q166, D307, and K334. Q166 contacts phosphoenolpyruvate. D307 acts as the Proton acceptor in catalysis. The phosphoenolpyruvate site is built by R338, R379, and K405.

The protein belongs to the EPSP synthase family. In terms of assembly, monomer.

Its subcellular location is the cytoplasm. It catalyses the reaction 3-phosphoshikimate + phosphoenolpyruvate = 5-O-(1-carboxyvinyl)-3-phosphoshikimate + phosphate. Its pathway is metabolic intermediate biosynthesis; chorismate biosynthesis; chorismate from D-erythrose 4-phosphate and phosphoenolpyruvate: step 6/7. Functionally, catalyzes the transfer of the enolpyruvyl moiety of phosphoenolpyruvate (PEP) to the 5-hydroxyl of shikimate-3-phosphate (S3P) to produce enolpyruvyl shikimate-3-phosphate and inorganic phosphate. In Chlamydia abortus (strain DSM 27085 / S26/3) (Chlamydophila abortus), this protein is 3-phosphoshikimate 1-carboxyvinyltransferase.